The primary structure comprises 379 residues: Cytochrome b (379 aa).

4 helical membrane-spanning segments follow: residues F33–M53, W77–I98, W113–L133, and F178–L198. Heme b contacts are provided by H83 and H97. Heme b-binding residues include H182 and H196. H201 contacts a ubiquinone. The next 4 helical transmembrane spans lie at Y226–Y246, L288–H308, I320–G340, and Y347–P367.

The protein belongs to the cytochrome b family. The cytochrome bc1 complex contains 3 respiratory subunits (MT-CYB, CYC1 and UQCRFS1), 2 core proteins (UQCRC1 and UQCRC2) and probably 6 low-molecular weight proteins. Heme b is required as a cofactor.

The protein localises to the mitochondrion inner membrane. Component of the ubiquinol-cytochrome c reductase complex (complex III or cytochrome b-c1 complex) that is part of the mitochondrial respiratory chain. The b-c1 complex mediates electron transfer from ubiquinol to cytochrome c. Contributes to the generation of a proton gradient across the mitochondrial membrane that is then used for ATP synthesis. This Anguilla mossambica (African longfin eel) protein is Cytochrome b (mt-cyb).